The primary structure comprises 444 residues: Phosphoglucosamine mutase (444 aa).

The active-site Phosphoserine intermediate is the S102. Positions 102, 241, 243, and 245 each coordinate Mg(2+). S102 is modified (phosphoserine).

This sequence belongs to the phosphohexose mutase family. The cofactor is Mg(2+). Post-translationally, activated by phosphorylation.

It catalyses the reaction alpha-D-glucosamine 1-phosphate = D-glucosamine 6-phosphate. Functionally, catalyzes the conversion of glucosamine-6-phosphate to glucosamine-1-phosphate. The sequence is that of Phosphoglucosamine mutase from Mannheimia succiniciproducens (strain KCTC 0769BP / MBEL55E).